The sequence spans 527 residues: MALLRHLLPVLTVGSAVQSAVLVQDQFQTRCENFAGKIDLPNVKVNFASYIPGSTNLTLDNVPTCDQSQVVSSDICRVAMAVTTSNASEITLEAWFPRDYTGRFLSTGNGGLGGCIQYSDLDYASRLGFATVGANNGHNGTSGEPFYKAPEVLEDFVYRSVHTGIVVGKQLTKLFYDEGFDTSYYLGCSTGGRQGFKLAQDFPGEVDGIIAGAPAINFVGLLSWSAHFYPITGPVGSATYLSLDDWDLVHEEILRQCDGLDGAEDGIIEDPDLCHPNATTLLCSPGATSGSCLTATQVNTVHEVYAPLLSSNSTLIYPRMQPGGEQFAAPAMYNGQPFQYSKDWWRYVVYSDPTWNATKWTIRDAEAALRQNPYNIQTWNADLSPLRDSGSKLLTYHGLQDQLISSDDSKLYYHRLMKTMGVTSNQLDEFYRFFQISGMAHCQDGDGAYGIGNRAETEFSTEPEDNVLMAMVRWVEEGIAPETVRGAKFSDGVGSEVEYYRKHCRYPRRNVYKGPGDYTDETAWECV.

An N-terminal signal peptide occupies residues 1-19 (MALLRHLLPVLTVGSAVQS). Cystine bridges form between Cys-31–Cys-76 and Cys-65–Cys-115. N-linked (GlcNAc...) asparagine glycans are attached at residues Asn-56, Asn-86, and Asn-139. 4 cysteine pairs are disulfide-bonded: Cys-188–Cys-442, Cys-257–Cys-274, Cys-283–Cys-292, and Cys-504–Cys-526. The active-site Acyl-ester intermediate is Ser-189. Residues Asp-258, Asp-261, Ala-263, Asp-265, and Ile-267 each contribute to the Ca(2+) site. Asn-277 carries an N-linked (GlcNAc...) asparagine glycan. Asn-312 and Asn-356 each carry an N-linked (GlcNAc...) asparagine glycan. Catalysis depends on charge relay system residues Asp-401 and His-441.

The protein belongs to the tannase family.

The protein localises to the secreted. It catalyses the reaction feruloyl-polysaccharide + H2O = ferulate + polysaccharide.. Its function is as follows. Involved in degradation of plant cell walls. Hydrolyzes the feruloyl-arabinose ester bond in arabinoxylans as well as the feruloyl-galactose and feruloyl-arabinose ester bonds in pectin. This chain is Probable feruloyl esterase B (faeB), found in Emericella nidulans (strain FGSC A4 / ATCC 38163 / CBS 112.46 / NRRL 194 / M139) (Aspergillus nidulans).